A 354-amino-acid chain; its full sequence is CREB/ATF bZIP transcription factor (354 aa).

3 disordered regions span residues 1 to 95 (MRHS…PGEE), 113 to 156 (PRQP…AAEM), and 171 to 214 (GGCS…RKAA). Position 50 is a phosphoserine (Ser-50). Residues 121 to 132 (DPGLSSPGPLSS) are compositionally biased toward low complexity. Composition is skewed to gly residues over residues 133–143 (SGGGSDSGGLW) and 190–199 (PGGGGGGGSG). Positions 204 to 267 (QAATKSPRKA…QALQEESRYL (64 aa)) constitute a bZIP domain. Positions 205–214 (AATKSPRKAA) are enriched in low complexity. The interval 219–226 (RLNRLKKK) is basic motif. Residues 232-267 (LESRVRGLAAENQELRAENRELGKRVQALQEESRYL) are leucine-zipper. The HCFC1-binding motif (HBM) signature appears at 303–306 (DHDY).

It belongs to the bZIP family. ATF subfamily. As to quaternary structure, interacts with HCFC1; the interaction inhibits CREB3 transcriptional activity. Interacts with CREB3; the interaction occurs only in combination with HCFC1. As to expression, in adults, expressed most abundantly in heart, liver and skeletal muscle, moderately abundant in kidney and pancreas, and barely detectable in lung. In fetal tissues, expressed most abundantly in kidney and very low amounts in heart, lung and liver.

Its subcellular location is the nucleus. Functionally, strongly activates transcription when bound to HCFC1. Suppresses the expression of HSV proteins in cells infected with the virus in a HCFC1-dependent manner. Also suppresses the HCFC1-dependent transcriptional activation by CREB3 and reduces the amount of CREB3 in the cell. Able to down-regulate expression of some cellular genes in CREBZF-expressing cells. The sequence is that of CREB/ATF bZIP transcription factor (CREBZF) from Homo sapiens (Human).